The primary structure comprises 774 residues: Protein translocase subunit SecA (774 aa).

Residues Gln66, Gly84 to Ser88, and Asp474 each bind ATP.

This sequence belongs to the SecA family.

Its subcellular location is the plastid. The protein localises to the chloroplast stroma. It is found in the chloroplast thylakoid membrane. It catalyses the reaction ATP + H2O + cellular proteinSide 1 = ADP + phosphate + cellular proteinSide 2.. Has a central role in coupling the hydrolysis of ATP to the transfer of proteins across the thylakoid membrane. The polypeptide is Protein translocase subunit SecA (Cyanidioschyzon merolae (strain NIES-3377 / 10D) (Unicellular red alga)).